The following is a 371-amino-acid chain: Opsin Rh1 (371 aa).

At 1–47 (MERYSTPLIGPSFAALTNGSVTDKVTPDMAHLVHPYWNQFPAMEPKW) the chain is on the extracellular side. An N-linked (GlcNAc...) asparagine glycan is attached at N18. The helical transmembrane segment at 48–72 (AKFLAAYMVLIATISWCGNGVVIYI) threads the bilayer. Residues 73–84 (FSTTKSLRTPAN) are Cytoplasmic-facing. Residues 85–110 (LLVINLAISDFGIMITNTPMMGINLF) traverse the membrane as a helical segment. Over 111–124 (YETWVLGPLMCDIY) the chain is Extracellular. C121 and C198 are oxidised to a cystine. Residues 125-144 (GGLGSAFGCSSILSMCMISL) traverse the membrane as a helical segment. The Cytoplasmic segment spans residues 145-163 (DRYNVIVKGMAGQPMTIKL). A helical membrane pass occupies residues 164–187 (AIMKIALIWFMASIWTLAPVFGWS). The Extracellular segment spans residues 188 to 211 (RYVPEGNLTSCGIDYLERDWNPRS). Residues 212 to 239 (YLIFYSIFVYYLPLFLICYSYWFIIAAV) traverse the membrane as a helical segment. The Cytoplasmic segment spans residues 240–274 (SAHEKAMREQAKKMNVKSLRSSEDADKSAEGKLAK). Residues 275-298 (VALVTISLWFMAWTPYTIINTLGL) traverse the membrane as a helical segment. Topologically, residues 299 to 305 (FKYEGLT) are extracellular. The helical transmembrane segment at 306 to 330 (PLNTIWGACFAKSAACYNPIVYGIS) threads the bilayer. An N6-(retinylidene)lysine modification is found at K317. Residues 331–371 (HPKYGIALKEKCPCCVFGKVDDGKASDATSQATNNESETKA) are Cytoplasmic-facing.

The protein belongs to the G-protein coupled receptor 1 family. Opsin subfamily. Phosphorylated on some or all of the serine and threonine residues present in the C-terminal region.

It is found in the cell projection. The protein resides in the rhabdomere membrane. Its function is as follows. Visual pigments are the light-absorbing molecules that mediate vision. They consist of an apoprotein, opsin, covalently linked to cis-retinal. The polypeptide is Opsin Rh1 (NINAE) (Calliphora vicina (Blue blowfly)).